A 427-amino-acid chain; its full sequence is Trigger factor (427 aa).

The PPIase FKBP-type domain occupies 163–248 (GDTVILDFEG…LHEIKTKEVP (86 aa)).

The protein belongs to the FKBP-type PPIase family. Tig subfamily.

It localises to the cytoplasm. It carries out the reaction [protein]-peptidylproline (omega=180) = [protein]-peptidylproline (omega=0). In terms of biological role, involved in protein export. Acts as a chaperone by maintaining the newly synthesized protein in an open conformation. Functions as a peptidyl-prolyl cis-trans isomerase. The chain is Trigger factor from Listeria innocua serovar 6a (strain ATCC BAA-680 / CLIP 11262).